The sequence spans 494 residues: Alpha-amylase-related protein (494 aa).

The signal sequence occupies residues 1 to 20 (MFKFTFALALCVLAAGLVLA). Glutamine 21 is subject to Pyrrolidone carboxylic acid. Cysteine 48 and cysteine 104 are oxidised to a cystine. Asparagine 118, glutamine 169, and aspartate 178 together coordinate Ca(2+). A disulfide bridge connects residues cysteine 157 and cysteine 171. Arginine 206 provides a ligand contact to chloride. Residue aspartate 208 is the Nucleophile of the active site. Histidine 212 provides a ligand contact to Ca(2+). Catalysis depends on glutamate 245, which acts as the Proton donor. Positions 308 and 343 each coordinate chloride. 3 cysteine pairs are disulfide-bonded: cysteine 376-cysteine 382, cysteine 418-cysteine 441, and cysteine 448-cysteine 460.

It belongs to the glycosyl hydrolase 13 family. As to quaternary structure, monomer. Requires Ca(2+) as cofactor. It depends on chloride as a cofactor.

The protein resides in the secreted. The enzyme catalyses Endohydrolysis of (1-&gt;4)-alpha-D-glucosidic linkages in polysaccharides containing three or more (1-&gt;4)-alpha-linked D-glucose units.. In Drosophila pseudoobscura pseudoobscura (Fruit fly), this protein is Alpha-amylase-related protein (Amyrel).